Here is a 159-residue protein sequence, read N- to C-terminus: MVCSRGIFGIDIMNKKGIDSLFVSALYYSINKAIYDVMGDGGKVLGRRASYEMIKLLKDLGFIKENMSNEEIKNLFVNTFGLSEDLNIVEEDKKVIFEVINPTLDLFLKKLMEENLKPYVCPFMYLLSEIYSVSNNCRLMLSDVVPETEEKVKLIFKKV.

This is an uncharacterized protein from Methanocaldococcus jannaschii (strain ATCC 43067 / DSM 2661 / JAL-1 / JCM 10045 / NBRC 100440) (Methanococcus jannaschii).